Reading from the N-terminus, the 276-residue chain is 2-dehydro-3-deoxyphosphooctonate aldolase (276 aa).

The protein belongs to the KdsA family.

Its subcellular location is the cytoplasm. It carries out the reaction D-arabinose 5-phosphate + phosphoenolpyruvate + H2O = 3-deoxy-alpha-D-manno-2-octulosonate-8-phosphate + phosphate. Its pathway is carbohydrate biosynthesis; 3-deoxy-D-manno-octulosonate biosynthesis; 3-deoxy-D-manno-octulosonate from D-ribulose 5-phosphate: step 2/3. It participates in bacterial outer membrane biogenesis; lipopolysaccharide biosynthesis. This is 2-dehydro-3-deoxyphosphooctonate aldolase from Xanthomonas axonopodis pv. citri (strain 306).